We begin with the raw amino-acid sequence, 348 residues long: Protein pelota homolog (348 aa).

Belongs to the eukaryotic release factor 1 family. Pelota subfamily. In terms of assembly, monomer. The cofactor is a divalent metal cation.

It localises to the cytoplasm. Its function is as follows. May function in recognizing stalled ribosomes, interact with stem-loop structures in stalled mRNA molecules, and effect endonucleolytic cleavage of the mRNA. May play a role in the release non-functional ribosomes and degradation of damaged mRNAs. Has endoribonuclease activity. The protein is Protein pelota homolog of Methanococcus aeolicus (strain ATCC BAA-1280 / DSM 17508 / OCM 812 / Nankai-3).